Consider the following 366-residue polypeptide: Subtilisin-like protease het-Q2 (366 aa).

Residues 1 to 321 (MSAISHHSLS…RVLMALGEKT (321 aa)) enclose the Peptidase S8 domain. Asp35 serves as the catalytic Charge relay system. The disordered stretch occupies residues 79-98 (DFCQPSPPGDRQGPPPQPHS). The span at 83 to 96 (PSPPGDRQGPPPQP) shows a compositional bias: pro residues. Active-site charge relay system residues include His105 and Ser266. A helical transmembrane segment spans residues 261-283 (LVSGSSFATPVVVSVAALVLAFV).

The protein belongs to the peptidase S8 family.

The protein resides in the membrane. Functionally, serine protease involved in heterokaryon incompatibility, a process that ensures that during spontaneous vegetative cell fusion, only compatible cells from the same colony survive (non-self-recognition). In P.anserina, the het-q locus exists as 2 incompatible alleles, het-Q1 (AC B2AXJ5) and het-Q2 (this entry). Prevents cell fusion with strains containing the gasdermin-like protein het-Q1 by mediating proteolytic cleavage and maturation of het-Q1 during the allorecognition process, thereby triggering cell death. The protein is Subtilisin-like protease het-Q2 of Podospora anserina (Pleurage anserina).